The chain runs to 327 residues: Peroxidase 21 (327 aa).

Positions 1–28 (MANAKPFCLLGFFCLLLQLFSIFHIGNG) are cleaved as a signal peptide. Cystine bridges form between Cys39/Cys118, Cys72/Cys77, Cys124/Cys323, and Cys204/Cys231. The active-site Proton acceptor is His70. Positions 71, 74, 78, and 80 each coordinate Ca(2+). Pro167 serves as a coordination point for substrate. N-linked (GlcNAc...) asparagine glycosylation is present at Asn170. His197 is a heme b binding site. Ser198 lines the Ca(2+) pocket. Ca(2+) contacts are provided by Asp247, Thr250, and Asp255.

This sequence belongs to the peroxidase family. Classical plant (class III) peroxidase subfamily. Heme b serves as cofactor. Requires Ca(2+) as cofactor. Preferentially expressed in roots and leaves, slightly in stems.

It catalyses the reaction 2 a phenolic donor + H2O2 = 2 a phenolic radical donor + 2 H2O. In terms of biological role, removal of H(2)O(2), oxidation of toxic reductants, biosynthesis and degradation of lignin, suberization, auxin catabolism, response to environmental stresses such as wounding, pathogen attack and oxidative stress. These functions might be dependent on each isozyme/isoform in each plant tissue. Functionally, might function as heat shock-like defense protein. May be implicated in the systemic acquired resistance response. This is Peroxidase 21 (PER21) from Arabidopsis thaliana (Mouse-ear cress).